A 156-amino-acid polypeptide reads, in one-letter code: Small ribosomal subunit protein uS7 (156 aa).

This sequence belongs to the universal ribosomal protein uS7 family. In terms of assembly, part of the 30S ribosomal subunit. Contacts proteins S9 and S11.

One of the primary rRNA binding proteins, it binds directly to 16S rRNA where it nucleates assembly of the head domain of the 30S subunit. Is located at the subunit interface close to the decoding center, probably blocks exit of the E-site tRNA. In Streptomyces avermitilis (strain ATCC 31267 / DSM 46492 / JCM 5070 / NBRC 14893 / NCIMB 12804 / NRRL 8165 / MA-4680), this protein is Small ribosomal subunit protein uS7.